The chain runs to 397 residues: uncharacterized protein (397 aa).

4 consecutive transmembrane segments (helical) span residues tryptophan 142–alanine 162, serine 191–leucine 211, alanine 242–leucine 258, and alanine 260–phenylalanine 280.

This sequence belongs to the cation diffusion facilitator (CDF) transporter (TC 2.A.4) family. SLC30A subfamily.

The protein resides in the membrane. This is an uncharacterized protein from Schizosaccharomyces pombe (strain 972 / ATCC 24843) (Fission yeast).